A 103-amino-acid chain; its full sequence is Small ribosomal subunit protein uS10 (103 aa).

This sequence belongs to the universal ribosomal protein uS10 family. Part of the 30S ribosomal subunit.

Its function is as follows. Involved in the binding of tRNA to the ribosomes. The protein is Small ribosomal subunit protein uS10 of Paraburkholderia xenovorans (strain LB400).